A 557-amino-acid polypeptide reads, in one-letter code: MSLRLLIPLLFLPGLALADHRPCPDWPAQRARAEVSQLLKTLSHWDDHYHRQGVALVADELYDQSRQHLRHLQGCFDLASNDAPLATARGQVPHPVPHTGVDKLRDEPAVQRWLQGRQGMWIQPKVDGVAVSLVYQQGQLTQLLSRGDGVLGHDWSRHIPQLGRIVRQLPQPLDTVFQGELYWRLADHVQAEAGSANARGIVAGLLARKQLSDEQGSGIGLFVWDWPAGPGSQAERLAQLTALGFIDSQRFSVAIEGFDAAAHWRQHWYRTALPFATDGVILRQDARPPAQRWRAQAPYWIAAWKYPFSQALAQVRDIHFRIGRTGRITPLLQLEPIQLDDRRISQVSLGSLARWTQLDIRPGDQVAVSLAGLTIPRVESVVHRSPLRAPVLVPDPADHHLLSCWQASPACQEQFLARLAWLGGNKGLDMAGVGSGVWHQLVESGKVATLSDWLELTREDLLEVPGIAQARAERLLQAFSLGRRQPFERWLRGLGLPAPSHFSPGADWSALASRNIEQWLAEPGVGAVRAAQLQAFLSHEQVQALARRLRAHEIEGF.

Lys125 acts as the N6-AMP-lysine intermediate in catalysis.

This sequence belongs to the NAD-dependent DNA ligase family. LigB subfamily.

The enzyme catalyses NAD(+) + (deoxyribonucleotide)n-3'-hydroxyl + 5'-phospho-(deoxyribonucleotide)m = (deoxyribonucleotide)n+m + AMP + beta-nicotinamide D-nucleotide.. Catalyzes the formation of phosphodiester linkages between 5'-phosphoryl and 3'-hydroxyl groups in double-stranded DNA using NAD as a coenzyme and as the energy source for the reaction. The polypeptide is DNA ligase B (Pseudomonas entomophila (strain L48)).